A 174-amino-acid polypeptide reads, in one-letter code: Large ribosomal subunit protein uL16 (174 aa).

The protein belongs to the universal ribosomal protein uL16 family.

The polypeptide is Large ribosomal subunit protein uL16 (Archaeoglobus fulgidus (strain ATCC 49558 / DSM 4304 / JCM 9628 / NBRC 100126 / VC-16)).